Reading from the N-terminus, the 834-residue chain is MWGLGARGPDRGLLLALALGGLARAGGVEVEPGGAHGESGGFQVVTFEWAHVQDPYVIALWILVASLAKIGFHLSHKVTSVVPESALLIVLGLVLGGIVWAADHIASFTLTPTVFFFYLLPPIVLDAGYFMPNRLFFGNLGTILLYAVVGTVWNAATTGLSLYGVFLSGLMGDLQIGLLDFLLFGSLMAAVDPVAVLAVFEEVHVNEVLFIIVFGESLLNDAVTVVLYNVFESFVALGGDNVTGVDCVKGIVSFFVVSLGGTLVGVVFAFLLSLVTRFTKHVRIIEPGFVFIISYLSYLTSEMLSLSAILAITFCGICCQKYVKANISEQSATTVRYTMKMLASSAETIIFMFLGISAVNPFIWTWNTAFVLLTLVFISVYRAIGVVLQTWLLNRYRMVQLEPIDQVVLSYGGLRGAVAFALVVLLDGDKVKEKNLFVSTTIIVVFFTVIFQGLTIKPLVQWLKVKRSEHREPRLNEKLHGRAFDHILSAIEDISGQIGHNYLRDKWSHFDRKFLSRVLMRRSAQKSRDRILNVFHELNLKDAISYVAEGERRGSLAFIRSPSTDNVVNVDFTPRSSTVEASVSYLLRENVSAVCLDMQSLEQRRRSIRDAEDMVTHHTLQQYLYKPRQEYKHLYSRHELTPTEDEKQDREIFHRTMRKRLESFKSTKLGLNQNKKAAKLYKRERAQKRRNSSIPNGKLPMESPAQNFTIKEKDLELSDTEEPPNYDEEMSGGIEFLASVTKDTASDSPAGIDNPVFSPDEALDRSLLARLPPWLSPGETVVPSQRARTQIPYSPGTFCRLMPFRLSSKSVDSFLQADGPEERPPAALPESTHM.

Residues 1-25 (MWGLGARGPDRGLLLALALGGLARA) form the signal peptide. The Extracellular portion of the chain corresponds to 26-51 (GGVEVEPGGAHGESGGFQVVTFEWAH). Residues 52-74 (VQDPYVIALWILVASLAKIGFHL) form a helical membrane-spanning segment. At 75 to 82 (SHKVTSVV) the chain is on the cytoplasmic side. The chain crosses the membrane as a helical span at residues 83–102 (PESALLIVLGLVLGGIVWAA). Topologically, residues 103–111 (DHIASFTLT) are extracellular. Residues 112–129 (PTVFFFYLLPPIVLDAGY) traverse the membrane as a helical segment. Residues 130-132 (FMP) lie on the Cytoplasmic side of the membrane. Residues 133 to 168 (NRLFFGNLGTILLYAVVGTVWNAATTGLSLYGVFLS) form a helical membrane-spanning segment. A 1,2-diacyl-sn-glycero-3-phospho-(1D-myo-inositol)-binding residues include glycine 138, glycine 141, and threonine 142. At 169–181 (GLMGDLQIGLLDF) the chain is on the extracellular side. A helical transmembrane segment spans residues 182–203 (LLFGSLMAAVDPVAVLAVFEEV). Residues 204 to 205 (HV) are Cytoplasmic-facing. Residues 206–237 (NEVLFIIVFGESLLNDAVTVVLYNVFESFVAL) form a helical membrane-spanning segment. The Extracellular portion of the chain corresponds to 238–244 (GGDNVTG). Asparagine 241 carries an N-linked (GlcNAc...) asparagine glycan. A helical transmembrane segment spans residues 245–279 (VDCVKGIVSFFVVSLGGTLVGVVFAFLLSLVTRFT). Residues 280-281 (KH) lie on the Cytoplasmic side of the membrane. A helical membrane pass occupies residues 282–304 (VRIIEPGFVFIISYLSYLTSEML). The Extracellular segment spans residues 305-306 (SL). The helical transmembrane segment at 307 to 323 (SAILAITFCGICCQKYV) threads the bilayer. Residues 324–330 (KANISEQ) are Cytoplasmic-facing. A helical membrane pass occupies residues 331-359 (SATTVRYTMKMLASSAETIIFMFLGISAV). Topologically, residues 360–367 (NPFIWTWN) are extracellular. A helical membrane pass occupies residues 368-389 (TAFVLLTLVFISVYRAIGVVLQ). The Cytoplasmic segment spans residues 390–402 (TWLLNRYRMVQLE). Methionine 398 provides a ligand contact to a 1,2-diacyl-sn-glycero-3-phospho-(1D-myo-inositol). A helical membrane pass occupies residues 403–426 (PIDQVVLSYGGLRGAVAFALVVLL). Residues 427 to 433 (DGDKVKE) are Extracellular-facing. The helical transmembrane segment at 434 to 467 (KNLFVSTTIIVVFFTVIFQGLTIKPLVQWLKVKR) threads the bilayer. The Cytoplasmic portion of the chain corresponds to 468–834 (SEHREPRLNE…PAALPESTHM (367 aa)). Residues glutamine 497, isoleucine 498, and histidine 500 each contribute to the a 1,2-diacyl-sn-glycero-3-phospho-(1D-myo-inositol) site. Serine 555 and serine 563 each carry phosphoserine. The interaction with EZR stretch occupies residues 575–589 (RSSTVEASVSYLLRE). The interaction with NHERF4 stretch occupies residues 590 to 667 (NVSAVCLDMQ…RKRLESFKST (78 aa)). Residues 591–695 (VSAVCLDMQS…AQKRRNSSIP (105 aa)) form an interaction with AHCYL1 region. Serine 592 and serine 607 each carry phosphoserine. Serine 663 bears the Phosphoserine; by SGK1 mark. The segment covering 679 to 691 (KLYKRERAQKRRN) has biased composition (basic residues). The tract at residues 679–728 (KLYKRERAQKRRNSSIPNGKLPMESPAQNFTIKEKDLELSDTEEPPNYDE) is disordered. Positions 717–728 (LSDTEEPPNYDE) are enriched in acidic residues. A phosphoserine mark is found at serine 718, serine 810, and serine 813. The segment at 814 to 834 (FLQADGPEERPPAALPESTHM) is disordered.

Belongs to the monovalent cation:proton antiporter 1 (CPA1) transporter (TC 2.A.36) family. As to quaternary structure, homodimer. Found in the forms of complex and dynamic macromolecular complexes. Binds NHERF1 and NHERF2. Interacts with CHP1; increases SLC9A3 trafficking and activity at the plasma membrane. Interacts with CHP2 and SHANK2. Interacts with PDZK1 (via C-terminal PDZ domain). Interacts with NHERF4 and interaction decrease in response to elevated calcium ion levels. Interacts with AHCYL1; the interaction is required for SLC9A3 activity. Interacts with SNX27 (via PDZ domains); directs SLC9A3 membrane insertion from early endosomes to the plasma membrane. Interacts with EZR; interaction targets SLC9A3 to the apical membrane. Phosphorylated by PKA, which inhibits activity. Phosphorylation at Ser-663 by SGK1 is associated with increased abundance at the cell membrane. Phosphorylation at Ser-718 by CSNK2A1 regulates SLC9A3 activity through the formation of multiple signaling complexes.

The protein localises to the apical cell membrane. It is found in the cell membrane. It localises to the recycling endosome membrane. Its subcellular location is the early endosome membrane. It carries out the reaction Na(+)(in) + H(+)(out) = Na(+)(out) + H(+)(in). With respect to regulation, seems to switch between active and inactive modes in response to various stimuli. Activated directly or indirectly by membrane phosphatidylinositol (PIs). Regulated by a variety of auxiliary proteins, which facilitate the maturation, cell surface expression and function of the transporter. Inhibited specifically by the drug tenapanor. Functionally, plasma membrane Na(+)/H(+) antiporter. Exchanges intracellular H(+) ions for extracellular Na(+) in 1:1 stoichiometry, playing a key role in salt and fluid absorption and pH homeostasis. Major apical Na(+)/H(+) exchanger in kidney and intestine playing an important role in renal and intestine Na(+) absorption and blood pressure regulation. This is Sodium/hydrogen exchanger 3 from Homo sapiens (Human).